The sequence spans 226 residues: Protein-L-isoaspartate O-methyltransferase (226 aa).

Residue Ser66 is part of the active site.

Belongs to the methyltransferase superfamily. L-isoaspartyl/D-aspartyl protein methyltransferase family.

It localises to the cytoplasm. The catalysed reaction is [protein]-L-isoaspartate + S-adenosyl-L-methionine = [protein]-L-isoaspartate alpha-methyl ester + S-adenosyl-L-homocysteine. Its function is as follows. Catalyzes the methyl esterification of L-isoaspartyl residues in peptides and proteins that result from spontaneous decomposition of normal L-aspartyl and L-asparaginyl residues. It plays a role in the repair and/or degradation of damaged proteins. This is Protein-L-isoaspartate O-methyltransferase from Methanopyrus kandleri (strain AV19 / DSM 6324 / JCM 9639 / NBRC 100938).